Consider the following 526-residue polypeptide: ATP synthase subunit alpha (526 aa).

171-178 (GDRQTGKT) lines the ATP pocket.

Belongs to the ATPase alpha/beta chains family. As to quaternary structure, F-type ATPases have 2 components, CF(1) - the catalytic core - and CF(0) - the membrane proton channel. CF(1) has five subunits: alpha(3), beta(3), gamma(1), delta(1), epsilon(1). CF(0) has four main subunits: a(1), b(1), b'(1) and c(9-12).

It is found in the cell inner membrane. The enzyme catalyses ATP + H2O + 4 H(+)(in) = ADP + phosphate + 5 H(+)(out). Produces ATP from ADP in the presence of a proton gradient across the membrane. The alpha chain is a regulatory subunit. The protein is ATP synthase subunit alpha of Chlorobium phaeovibrioides (strain DSM 265 / 1930) (Prosthecochloris vibrioformis (strain DSM 265)).